The primary structure comprises 276 residues: Undecaprenyl-diphosphatase 1 (276 aa).

6 helical membrane passes run 43–63 (RAMA…VWEF), 85–105 (ANLL…ADLI), 109–129 (LFNP…MLWA), 184–204 (ATEF…VYSG), 214–234 (ADFP…MIAV), and 254–274 (IVFG…WTAA).

It belongs to the UppP family.

Its subcellular location is the cell inner membrane. It catalyses the reaction di-trans,octa-cis-undecaprenyl diphosphate + H2O = di-trans,octa-cis-undecaprenyl phosphate + phosphate + H(+). In terms of biological role, catalyzes the dephosphorylation of undecaprenyl diphosphate (UPP). Confers resistance to bacitracin. In Pseudomonas fluorescens (strain Pf0-1), this protein is Undecaprenyl-diphosphatase 1.